We begin with the raw amino-acid sequence, 218 residues long: MWPPSGAVRNLALVLARSQRARTCSGVERVSYTQGQSPEPRTREYFYYVDHQGQLFLDDSKMKNFITCFKDLQFLVTFFSRLRPNHSGRYEASFPFLSLCGRERNFLRCEDRPVVFTHLLASDSESPRLSYCGGGEALAIPFEPARLLPLAANGRLYHPAPERAGGVGLVRSALAFELSACFEYGPSSPTVPSHVHWQGRRIALTMDLAPLLPAAPPP.

It belongs to the UPF0598 family.

This Mus musculus (Mouse) protein is UPF0598 protein C8orf82 homolog.